Here is a 164-residue protein sequence, read N- to C-terminus: Protein DOWNSTREAM OF FLC (164 aa).

The signal sequence occupies residues 1 to 23 (MAKSFVPLIAVLCVLVLPLAAMA). 3 disulfide bridges follow: Cys36–Cys107, Cys39–Cys148, and Cys60–Cys95.

This sequence belongs to the Ole e I family.

Its subcellular location is the secreted. Functionally, part of a three-gene cluster containing FLC, UFC and DFC, which is coordinately regulated in response to vernalization. Not regulated by FLX. This Arabidopsis thaliana (Mouse-ear cress) protein is Protein DOWNSTREAM OF FLC (DFC).